We begin with the raw amino-acid sequence, 158 residues long: Copper transporter 2 (158 aa).

Residues 1 to 20 (MDHDHMHDMPPPSPSSSSMS) form a disordered region. 2 helical membrane passes run 53-73 (GMYA…EWLA) and 104-124 (YLVM…AIAG).

The protein belongs to the copper transporter (Ctr) (TC 1.A.56) family. SLC31A subfamily. In terms of tissue distribution, highly expressed in leaves and at lower levels in roots, stems and flowers.

It is found in the membrane. In terms of biological role, involved in the transport of copper. This Arabidopsis thaliana (Mouse-ear cress) protein is Copper transporter 2 (COPT2).